The following is a 604-amino-acid chain: Lipoma-preferred partner homolog (604 aa).

2 disordered regions span residues 31 to 96 (TPSI…LDDV) and 129 to 381 (DLES…AFRP). Residues 32–41 (PSISVSTQQT) show a composition bias toward polar residues. Low complexity-rich tracts occupy residues 42 to 53 (PKKFAPVVAPKP) and 143 to 161 (GSGT…TPVT). A compositionally biased stretch (polar residues) spans 207-226 (SYTTASTPSRPTFNVQVRTA). A compositionally biased stretch (low complexity) spans 365–377 (SGYPSSGPTSSTP). LIM zinc-binding domains lie at 406 to 465 (GRCA…INTL), 466 to 526 (EQCS…KFAP), and 527 to 595 (RCSV…RIQA).

It belongs to the zyxin/ajuba family.

It is found in the nucleus. The protein resides in the cytoplasm. Its subcellular location is the cell junction. Its function is as follows. May play a structural role at sites of cell adhesion in maintaining cell shape and motility. May be involved in signal transduction from cell adhesion sites to the nucleus. In Gallus gallus (Chicken), this protein is Lipoma-preferred partner homolog (LPP).